Here is a 433-residue protein sequence, read N- to C-terminus: 23S rRNA (uracil(1939)-C(5))-methyltransferase RlmD (433 aa).

In terms of domain architecture, TRAM spans 1 to 53 (MPTAVIESLDHEGRGIARVEGKAVFIEGGLPGETVEYRVLRSKPNYEQAEATR). Residues cysteine 66, cysteine 72, cysteine 75, and cysteine 154 each contribute to the [4Fe-4S] cluster site. The S-adenosyl-L-methionine site is built by glutamine 263, phenylalanine 292, asparagine 297, glutamate 313, asparagine 341, and aspartate 362. Cysteine 389 acts as the Nucleophile in catalysis.

The protein belongs to the class I-like SAM-binding methyltransferase superfamily. RNA M5U methyltransferase family. RlmD subfamily.

The enzyme catalyses uridine(1939) in 23S rRNA + S-adenosyl-L-methionine = 5-methyluridine(1939) in 23S rRNA + S-adenosyl-L-homocysteine + H(+). Its function is as follows. Catalyzes the formation of 5-methyl-uridine at position 1939 (m5U1939) in 23S rRNA. This is 23S rRNA (uracil(1939)-C(5))-methyltransferase RlmD from Azoarcus sp. (strain BH72).